Reading from the N-terminus, the 379-residue chain is Cytochrome b (379 aa).

The next 4 helical transmembrane spans lie at 33–53, 77–98, 113–133, and 178–198; these read FGSLLGICLMIQILTGLFLAM, WLIRYLHANGASMFFICLFIHV, WNIGIILFFTTMATAFVGYVL, and FFAFHFILPFIITAFVLVHLL. Heme b is bound by residues His83 and His97. Heme b contacts are provided by His182 and His196. His201 lines the a ubiquinone pocket. 4 helical membrane passes run 226 to 246, 288 to 308, 320 to 340, and 347 to 367; these read IKDLLGILLLLMALMILALFF, LGGVLALILSILILAAFPLLN, ITQTIYWTFIANLLILTWIGG, and FTMXGXIASITYFIIIIILMP.

This sequence belongs to the cytochrome b family. In terms of assembly, the cytochrome bc1 complex contains 11 subunits: 3 respiratory subunits (MT-CYB, CYC1 and UQCRFS1), 2 core proteins (UQCRC1 and UQCRC2) and 6 low-molecular weight proteins (UQCRH/QCR6, UQCRB/QCR7, UQCRQ/QCR8, UQCR10/QCR9, UQCR11/QCR10 and a cleavage product of UQCRFS1). This cytochrome bc1 complex then forms a dimer. It depends on heme b as a cofactor.

Its subcellular location is the mitochondrion inner membrane. Its function is as follows. Component of the ubiquinol-cytochrome c reductase complex (complex III or cytochrome b-c1 complex) that is part of the mitochondrial respiratory chain. The b-c1 complex mediates electron transfer from ubiquinol to cytochrome c. Contributes to the generation of a proton gradient across the mitochondrial membrane that is then used for ATP synthesis. The polypeptide is Cytochrome b (MT-CYB) (Necromys amoenus (Pleasant bolo mouse)).